A 603-amino-acid chain; its full sequence is Serine/threonine-protein kinase PLK1 (603 aa).

Lysine 19 participates in a covalent cross-link: Glycyl lysine isopeptide (Lys-Gly) (interchain with G-Cter in ubiquitin). Residues 53-305 form the Protein kinase domain; the sequence is YVRGRFLGKG…IHELLNDEFF (253 aa). ATP-binding positions include 59 to 67 and lysine 82; that span reads LGKGGFAKC. Serine 103 bears the Phosphoserine mark. Glutamate 131 contacts ATP. A Phosphoserine modification is found at serine 137. The Proton acceptor role is filled by aspartate 176. ATP contacts are provided by residues 178-181 and aspartate 194; that span reads KLGN. The interval 194-221 is activation loop; it reads DFGLATKVEYEGERKKTLCGTPNYIAPE. The residue at position 210 (threonine 210) is a Phosphothreonine; by AURKA. At threonine 214 the chain carries Phosphothreonine. Phosphoserine; by autocatalysis is present on residues serine 269 and serine 335. Positions 337 to 340 match the D-box that targets the protein for proteasomal degradation in anaphase motif; it reads RKPL. A Glycyl lysine isopeptide (Lys-Gly) (interchain with G-Cter in SUMO2) cross-link involves residue lysine 338. A phosphoserine mark is found at serine 375 and serine 450. The 79-residue stretch at 410-488 folds into the POLO box 1 domain; that stretch reads WVSKWVDYSD…LNYFRNYMSE (79 aa). Residue lysine 492 forms a Glycyl lysine isopeptide (Lys-Gly) (interchain with G-Cter in ubiquitin) linkage. A linker region spans residues 493-507; it reads AGANITPREGDELAR. Threonine 498 carries the post-translational modification Phosphothreonine. The POLO box 2 domain maps to 510-592; the sequence is YLRTWFRTRS…ARTMVDKLLS (83 aa). Positions 538-540 are important for interaction with phosphorylated proteins; that stretch reads HTK.

It belongs to the protein kinase superfamily. Ser/Thr protein kinase family. CDC5/Polo subfamily. As to quaternary structure, interacts with CEP170 and EVI5. Interacts and phosphorylates ERCC6L. Interacts with FAM29A. Interacts with SLX4/BTBD12 and TTDN1. Interacts with BUB1B. Interacts (via POLO-box domain) with the phosphorylated form of BUB1, CENPU and CDC25C. Interacts with isoform 3 of SGO1. Interacts with BORA, KIF2A and AURKA. Interacts with TOPORS and CYLD. Interacts with ECT2; the interaction is stimulated upon phosphorylation of ECT2 on 'Thr-444'. Interacts with PRC1. Interacts with KIF20A/MKLP2 (when phosphorylated), leading to the recruitment at the central spindle. Interacts (via POLO box domains) with PPP1R12A/MYPT1 (when previously phosphorylated by CDK1). Part of an astrin (SPAG5)-kinastrin (SKAP) complex containing KNSTRN, SPAG5, PLK1, DYNLL1 and SGO2A. Interacts with BIRC6/bruce. Interacts with CDK1-phosphorylated DCTN6 during mitotic prometaphase; the interaction facilitates recruitment to kinetochores. Interacts with CDK1-phosphorylated FRY; this interaction occurs in mitotic cells, but not in interphase cells. FRY interaction facilitates AURKA-mediated PLK1 phosphorylation. Interacts with CEP68; the interaction phosphorylates CEP68. Interacts (via POLO-box domain) with DCTN1. Interacts with CEP20 in later G1, S, G2 and M phases of the cell cycle; this interaction recruits PLK1 to centrosomes, a step required for S phase progression. Interacts with HSF1; this interaction increases upon heat shock but does not modulate neither HSF1 homotrimerization nor DNA-binding activities. Interacts with HNRNPU; this interaction induces phosphorylation of HNRNPU in mitosis. Interacts (via its N-terminus) with RIOK2. Interacts with KLHL22. Interacts (via POLO box domains) with NEDD9/HEF1 (via C-terminus). Interacts (via RVxF motif) with FIRRM; regulates PLK1 kinase activity. Interacts with SKA3; the interaction promotes the stability of PLK1. Interacts with the MTMR3:MTMR4 heterooligomer; brings CEP55 and PLK1 together during early mitosis, regulating the phosphorylation of CEP55 by PLK1 and its recruitment to the midbody where it can mediate cell abscission. In terms of processing, catalytic activity is enhanced by phosphorylation of Thr-210. Phosphorylation at Thr-210 is first detected on centrosomes in the G2 phase of the cell cycle, peaks in prometaphase and gradually disappears from centrosomes during anaphase. Dephosphorylation at Thr-210 at centrosomes is probably mediated by protein phosphatase 1C (PP1C), via interaction with PPP1R12A/MYPT1. Autophosphorylation and phosphorylation of Ser-137 may not be significant for the activation of PLK1 during mitosis, but may enhance catalytic activity during recovery after DNA damage checkpoint. Phosphorylated in vitro by STK10. Ubiquitinated by the anaphase promoting complex/cyclosome (APC/C) in anaphase and following DNA damage, leading to its degradation by the proteasome. Ubiquitination is mediated via its interaction with FZR1/CDH1. Ubiquitination and subsequent degradation prevents entry into mitosis and is essential to maintain an efficient G2 DNA damage checkpoint. Monoubiquitination at Lys-492 by the BCR(KLHL22) ubiquitin ligase complex does not lead to degradation: it promotes PLK1 dissociation from phosphoreceptor proteins and subsequent removal from kinetochores, allowing silencing of the spindle assembly checkpoint (SAC) and chromosome segregation. In terms of tissue distribution, newborn and adult spleen, fetal and newborn kidney, liver, brain, thymus and adult bone marrow, thymus, ovary and testes.

The protein resides in the nucleus. The protein localises to the chromosome. It is found in the centromere. It localises to the kinetochore. Its subcellular location is the cytoplasm. The protein resides in the cytoskeleton. The protein localises to the microtubule organizing center. It is found in the centrosome. It localises to the spindle. Its subcellular location is the midbody. It catalyses the reaction L-seryl-[protein] + ATP = O-phospho-L-seryl-[protein] + ADP + H(+). The enzyme catalyses L-threonyl-[protein] + ATP = O-phospho-L-threonyl-[protein] + ADP + H(+). Its activity is regulated as follows. Activated by phosphorylation of Thr-210 by AURKA; phosphorylation by AURKA is enhanced by BORA. Once activated, activity is stimulated by binding target proteins. Binding of target proteins has no effect on the non-activated kinase. Several inhibitors targeting PLKs are currently in development and are under investigation in a growing number of clinical trials, such as BI 2536, an ATP-competitive PLK1 inhibitor or BI 6727, a dihydropteridinone that specifically inhibits the catalytic activity of PLK1. Functionally, serine/threonine-protein kinase that performs several important functions throughout M phase of the cell cycle, including the regulation of centrosome maturation and spindle assembly, the removal of cohesins from chromosome arms, the inactivation of anaphase-promoting complex/cyclosome (APC/C) inhibitors, and the regulation of mitotic exit and cytokinesis. Polo-like kinase proteins act by binding and phosphorylating proteins that are already phosphorylated on a specific motif recognized by the POLO box domains. Phosphorylates BORA, BUB1B/BUBR1, CCNB1, CDC25C, CEP55, ECT2, ERCC6L, FBXO5/EMI1, FOXM1, KIF20A/MKLP2, CENPU, NEDD1, NINL, NPM1, NUDC, PKMYT1/MYT1, KIZ, MRE11, PPP1R12A/MYPT1, POLQ, PRC1, RACGAP1/CYK4, RAD51, RHNO1, SGO1, STAG2/SA2, TEX14, TOPORS, p73/TP73, TPT1, WEE1 and HNRNPU. Plays a key role in centrosome functions and the assembly of bipolar spindles by phosphorylating KIZ, NEDD1 and NINL. NEDD1 phosphorylation promotes subsequent targeting of the gamma-tubulin ring complex (gTuRC) to the centrosome, an important step for spindle formation. Phosphorylation of NINL component of the centrosome leads to NINL dissociation from other centrosomal proteins. Involved in mitosis exit and cytokinesis by phosphorylating CEP55, ECT2, KIF20A/MKLP2, CENPU, PRC1 and RACGAP1. Recruited at the central spindle by phosphorylating and docking PRC1 and KIF20A/MKLP2; creates its own docking sites on PRC1 and KIF20A/MKLP2 by mediating phosphorylation of sites subsequently recognized by the POLO box domains. Phosphorylates RACGAP1, thereby creating a docking site for the Rho GTP exchange factor ECT2 that is essential for the cleavage furrow formation. Promotes the central spindle recruitment of ECT2. Plays a central role in G2/M transition of mitotic cell cycle by phosphorylating CCNB1, CDC25C, FOXM1, CENPU, PKMYT1/MYT1, PPP1R12A/MYPT1 and WEE1. Part of a regulatory circuit that promotes the activation of CDK1 by phosphorylating the positive regulator CDC25C and inhibiting the negative regulators WEE1 and PKMYT1/MYT1. Also acts by mediating phosphorylation of cyclin-B1 (CCNB1) on centrosomes in prophase. Phosphorylates FOXM1, a key mitotic transcription regulator, leading to enhance FOXM1 transcriptional activity. Involved in kinetochore functions and sister chromatid cohesion by phosphorylating BUB1B/BUBR1, FBXO5/EMI1 and STAG2/SA2. PLK1 is high on non-attached kinetochores suggesting a role of PLK1 in kinetochore attachment or in spindle assembly checkpoint (SAC) regulation. Required for kinetochore localization of BUB1B. Regulates the dissociation of cohesin from chromosomes by phosphorylating cohesin subunits such as STAG2/SA2. Phosphorylates SGO1: required for spindle pole localization of isoform 3 of SGO1 and plays a role in regulating its centriole cohesion function. Mediates phosphorylation of FBXO5/EMI1, a negative regulator of the APC/C complex during prophase, leading to FBXO5/EMI1 ubiquitination and degradation by the proteasome. Acts as a negative regulator of p53 family members: phosphorylates TOPORS, leading to inhibit the sumoylation of p53/TP53 and simultaneously enhance the ubiquitination and subsequent degradation of p53/TP53. Phosphorylates the transactivation domain of the transcription factor p73/TP73, leading to inhibit p73/TP73-mediated transcriptional activation and pro-apoptotic functions. Phosphorylates BORA, and thereby promotes the degradation of BORA. Contributes to the regulation of AURKA function. Also required for recovery after DNA damage checkpoint and entry into mitosis. Phosphorylates MISP, leading to stabilization of cortical and astral microtubule attachments required for proper spindle positioning. Together with MEIKIN, acts as a regulator of kinetochore function during meiosis I: required both for mono-orientation of kinetochores on sister chromosomes and protection of centromeric cohesin from separase-mediated cleavage. Phosphorylates CEP68 and is required for its degradation. Regulates nuclear envelope breakdown during prophase by phosphorylating DCTN1 resulting in its localization in the nuclear envelope. Phosphorylates the heat shock transcription factor HSF1, promoting HSF1 nuclear translocation upon heat shock. Phosphorylates HSF1 also in the early mitotic period; this phosphorylation regulates HSF1 localization to the spindle pole, the recruitment of the SCF(BTRC) ubiquitin ligase complex induicing HSF1 degradation, and hence mitotic progression. Regulates mitotic progression by phosphorylating RIOK2. Through the phosphorylation of DZIP1 regulates the localization during mitosis of the BBSome, a ciliary protein complex involved in cilium biogenesis. Regulates DNA repair during mitosis by mediating phosphorylation of POLQ and RHNO1, thereby promoting POLQ recruitment to DNA damage sites. Phosphorylates ATXN10 which may play a role in the regulation of cytokinesis and may stimulate the proteasome-mediated degradation of ATXN10. This Mus musculus (Mouse) protein is Serine/threonine-protein kinase PLK1 (Plk1).